The chain runs to 845 residues: MELNVDSAKQLLAEHEQELQSAHDAHSILLASQPITAATTHPNATASNAARAVPVVAPSSVPTPTAASTPFISTQPPAPAQTGRMQLIDEQQKFNSADFSPHLENWGLADAGFGYDLCAVLGSQSTGKSTLLNKLFGTNFDVMSESARQQTTKGIWMCKGLKMNVLVMDVEGTDGRERGEDQDFERKSALFSMASAEVLIVNLWEHQVGLYQGANMGLLKTVFEVNLGLFQASRAKTAGAKDKTLLLFVIRDHIGVTPLENLSATIMADLTKIWHSLSKPQGLELSKITDFFDFMFTTLPHKILQPAEFDKAVDVLRNRFVNPKDPNFVFKTEYHKRIPADGLAHYLESIWEQVMTNKDLDLPTQQELLAQFRCDEIANVAFAHFATSIKDFRKHIEGGSVVESLGADMALHRSTALSKFDRDASRYHQEVYKRKRIDLLDKLNGSLSPFFLGQLKNLHRLMLQSFKQAVLDRMRTEPNYDFGEVVSSEKRTALAKFSAAAQAVLLTDTDWTIDDEVVELDVEIQSISDTMRVEETKKMVAQIERTFNKNIGEPVELALKSAKRSMWDEVLISFSTLLEQAEATYVRKATSFNCTDDENEHALLALRRKSWMSMRAKVDEQTADSVIAAKLRNSFEDGFRYDDAGVPRVWKPEDDMDGAFRKARDETLELIALYAKIQAVDTTLMRELRSKFEDAEPVGLVVEDEAFDWHATLSVLSETRKNDIGMRFRKEADAMYVEAKRATVSSIAQVPLWMYGVMLVLGWNELMAILSSPVYFAFLLVLIASAYIVWRLNLSGPLISVLRAVANEVHRLADAQLRTHFSQPLREPRPPAESRPAEQIELEPN.

The stretch at 1-29 forms a coiled coil; sequence MELNVDSAKQLLAEHEQELQSAHDAHSIL. Residues 1-749 are Cytoplasmic-facing; that stretch reads MELNVDSAKQ…KRATVSSIAQ (749 aa). The GB1/RHD3-type G domain maps to 112 to 334; sequence GFGYDLCAVL…DPNFVFKTEY (223 aa). 122-129 contributes to the GTP binding site; sequence GSQSTGKS. The chain crosses the membrane as a helical span at residues 750-770; the sequence is VPLWMYGVMLVLGWNELMAIL. The Lumenal portion of the chain corresponds to 771–773; the sequence is SSP. The helical transmembrane segment at 774–794 threads the bilayer; sequence VYFAFLLVLIASAYIVWRLNL. The Cytoplasmic portion of the chain corresponds to 795–845; the sequence is SGPLISVLRAVANEVHRLADAQLRTHFSQPLREPRPPAESRPAEQIELEPN. The segment at 823-845 is disordered; the sequence is QPLREPRPPAESRPAEQIELEPN. The span at 826–838 shows a compositional bias: basic and acidic residues; that stretch reads REPRPPAESRPAE.

This sequence belongs to the TRAFAC class dynamin-like GTPase superfamily. GB1/RHD3 GTPase family. RHD3 subfamily.

Its subcellular location is the endoplasmic reticulum membrane. Cooperates with the reticulon proteins and tubule-shaping DP1 family proteins to generate and maintain the structure of the tubular endoplasmic reticulum network. Has GTPase activity, which is required for its function in ER organization. This Mycosarcoma maydis (Corn smut fungus) protein is Protein SEY1.